A 207-amino-acid polypeptide reads, in one-letter code: GTP cyclohydrolase 1 (207 aa).

Residues C88, H91, and C162 each contribute to the Zn(2+) site.

It belongs to the GTP cyclohydrolase I family. In terms of assembly, toroid-shaped homodecamer, composed of two pentamers of five dimers.

The catalysed reaction is GTP + H2O = 7,8-dihydroneopterin 3'-triphosphate + formate + H(+). It participates in cofactor biosynthesis; 7,8-dihydroneopterin triphosphate biosynthesis; 7,8-dihydroneopterin triphosphate from GTP: step 1/1. This Sulfurisphaera tokodaii (strain DSM 16993 / JCM 10545 / NBRC 100140 / 7) (Sulfolobus tokodaii) protein is GTP cyclohydrolase 1.